The primary structure comprises 1218 residues: Chitin synthase 4 (1218 aa).

Disordered stretches follow at residues 1 to 93 and 132 to 190; these read MAEP…PERN and TVSS…RRQK. Basic and acidic residues predominate over residues 14-34; the sequence is TRDKSHSPYRESPSRRLRDVE. An N-linked (GlcNAc...) asparagine glycan is attached at asparagine 50. Polar residues-rich tracts occupy residues 71 to 80 and 133 to 142; these read SNPNPMSQSD and VSSGSTQQDT. The span at 175-190 shows a compositional bias: basic and acidic residues; the sequence is RKDTRNLTEEEKRRQK. N-linked (GlcNAc...) asparagine glycosylation occurs at asparagine 180. 2 helical membrane-spanning segments follow: residues 200–220 and 235–255; these read IWNIYCAVVTFWAPDCLLQCF and VGLISIILLIAAFVGFLTFGF. N-linked (GlcNAc...) asparagine glycosylation is found at asparagine 365, asparagine 404, and asparagine 426. Residues 487–507 traverse the membrane as a helical segment; sequence VVLYVSLVFILAIVAAKFFLA. Disordered regions lie at residues 548-570 and 582-606; these read PKITDPASTVTGSDGRTSKRGSM and YAVDRRSSRPPPTTMTSQSSNAKLL. Polar residues predominate over residues 553–562; that stretch reads PASTVTGSDG. 3 N-linked (GlcNAc...) asparagine glycosylation sites follow: asparagine 617, asparagine 903, and asparagine 1030. A run of 3 helical transmembrane segments spans residues 1062-1082, 1087-1107, and 1115-1135; these read IGTLVLPAAISFTFYLIIISI, VPVIPLVLLALILGLPAILIV, and YILWMGIYLLSLPIWNFVLPA. The tract at residues 1188–1218 is disordered; that stretch reads QANGSVWNQQPPTRPPSGYGSMHGFEPYRDY. Over residues 1189-1198 the composition is skewed to polar residues; sequence ANGSVWNQQP. An N-linked (GlcNAc...) asparagine glycan is attached at asparagine 1190.

The protein belongs to the chitin synthase family. Class IV subfamily. Post-translationally, maximal activity requires trypsin activation, suggesting a zymogenic nature.

It is found in the cell membrane. It catalyses the reaction [(1-&gt;4)-N-acetyl-beta-D-glucosaminyl](n) + UDP-N-acetyl-alpha-D-glucosamine = [(1-&gt;4)-N-acetyl-beta-D-glucosaminyl](n+1) + UDP + H(+). With respect to regulation, activity is stimulated by Mg(2+), and is more inhibited by polyoxin D than by nikkomycin. Functionally, polymerizes chitin, a structural polymer of the cell wall and septum, by transferring the sugar moiety of UDP-GlcNAc to the non-reducing end of the growing chitin polymer. CHS4 synthesizes a large amount of chitin and appears to play a role in the process of cell separation. CHS4 is particularly well suited for functioning at the higher temperatures associated with its poorly characterized saprophic environment and with human infection. The chain is Chitin synthase 4 from Exophiala dermatitidis (strain ATCC 34100 / CBS 525.76 / NIH/UT8656) (Black yeast).